The primary structure comprises 341 residues: Cyclic GMP-AMP synthase (341 aa).

Residue S56 participates in ATP binding. Residues D71 and D73 contribute to the active site. D73 is a Mg(2+) binding site. N109 is an ATP binding site. Residue D123 is part of the active site. A Mg(2+)-binding site is contributed by D123. Residues L192 and D238 each contribute to the ATP site.

It belongs to the CD-NTase family. B04 subfamily. Monomer. Mg(2+) serves as cofactor.

It catalyses the reaction GTP + ATP = 3',3'-cGAMP + 2 diphosphate. In terms of biological role, cyclic nucleotide synthase (second messenger synthase) of a CBASS antivirus system. CBASS (cyclic oligonucleotide-based antiphage signaling system) provides immunity against bacteriophage. The CD-NTase protein synthesizes cyclic nucleotides in response to infection; these serve as specific second messenger signals. The signals activate a diverse range of effectors, leading to bacterial cell death and thus abortive phage infection. A type II-A(GA) CBASS system. Functionally, catalyzes the synthesis of 3'3'-cyclic GMP-AMP (3'3'-cGAMP) from GTP and ATP, a second messenger in cell signal transduction. May make another product. Controls the activity of the CBASS cGAMP-activated phospholipase effector protein. The protein is Cyclic GMP-AMP synthase of Bacteroides fragilis.